The chain runs to 276 residues: Digeranylgeranylglyceryl phosphate synthase (276 aa).

A run of 8 helical transmembrane segments spans residues 12–34 (PHNC…GSVP), 38–60 (ILIL…NDYF), 84–104 (ALWY…LISL), 107–127 (FAFA…LKPL), 146–166 (GAIA…AFLV), 202–222 (VAAF…KAGV), 224–244 (VGYY…YLIL), and 256–276 (QLLL…AALM).

The protein belongs to the UbiA prenyltransferase family. DGGGP synthase subfamily. Requires Mg(2+) as cofactor.

Its subcellular location is the cell membrane. It carries out the reaction sn-3-O-(geranylgeranyl)glycerol 1-phosphate + (2E,6E,10E)-geranylgeranyl diphosphate = 2,3-bis-O-(geranylgeranyl)-sn-glycerol 1-phosphate + diphosphate. It participates in membrane lipid metabolism; glycerophospholipid metabolism. Prenyltransferase that catalyzes the transfer of the geranylgeranyl moiety of geranylgeranyl diphosphate (GGPP) to the C2 hydroxyl of (S)-3-O-geranylgeranylglyceryl phosphate (GGGP). This reaction is the second ether-bond-formation step in the biosynthesis of archaeal membrane lipids. In Thermococcus gammatolerans (strain DSM 15229 / JCM 11827 / EJ3), this protein is Digeranylgeranylglyceryl phosphate synthase.